The sequence spans 394 residues: 1-deoxy-D-xylulose 5-phosphate reductoisomerase (394 aa).

8 residues coordinate NADPH: Thr10, Gly11, Ser12, Ile13, Gly38, Arg39, Asn40, and Asn123. A 1-deoxy-D-xylulose 5-phosphate-binding site is contributed by Lys124. Position 125 (Glu125) interacts with NADPH. Asp149 is a Mn(2+) binding site. 4 residues coordinate 1-deoxy-D-xylulose 5-phosphate: Ser150, Glu151, Ser175, and His198. Glu151 contacts Mn(2+). Gly204 lines the NADPH pocket. Residues Ser211, Asn216, Lys217, and Glu220 each contribute to the 1-deoxy-D-xylulose 5-phosphate site. Mn(2+) is bound at residue Glu220.

This sequence belongs to the DXR family. The cofactor is Mg(2+). Mn(2+) serves as cofactor.

The enzyme catalyses 2-C-methyl-D-erythritol 4-phosphate + NADP(+) = 1-deoxy-D-xylulose 5-phosphate + NADPH + H(+). The protein operates within isoprenoid biosynthesis; isopentenyl diphosphate biosynthesis via DXP pathway; isopentenyl diphosphate from 1-deoxy-D-xylulose 5-phosphate: step 1/6. Its function is as follows. Catalyzes the NADPH-dependent rearrangement and reduction of 1-deoxy-D-xylulose-5-phosphate (DXP) to 2-C-methyl-D-erythritol 4-phosphate (MEP). This Cereibacter sphaeroides (strain ATCC 17023 / DSM 158 / JCM 6121 / CCUG 31486 / LMG 2827 / NBRC 12203 / NCIMB 8253 / ATH 2.4.1.) (Rhodobacter sphaeroides) protein is 1-deoxy-D-xylulose 5-phosphate reductoisomerase.